The primary structure comprises 403 residues: Vitamin D(3) 25-hydroxylase (403 aa).

Residue Cys347 coordinates heme.

Belongs to the cytochrome P450 family. It depends on heme as a cofactor.

The protein localises to the cytoplasm. The enzyme catalyses 5beta-cholestane-3alpha,7alpha,12alpha-triol + 6 reduced [adrenodoxin] + 3 O2 + 5 H(+) = (25R)-3alpha,7alpha,12alpha-trihydroxy-5beta-cholestan-26-oate + 6 oxidized [adrenodoxin] + 4 H2O. Activated by partially methylated beta-cyclodextrin. Its function is as follows. Hydroxylates vitamin D(3) into 25-hydroxyvitamin D(3) and 1-alpha,25-dihydroxyvitamin D(3), its physiologically active forms. It first hydroxylates the C-25 position of vitamin D(3) to form 25-hydroxyvitamin D(3), then subsequently hydroxylates the C-1-alpha position to form 1-alpha,25-dihydroxyvitamin D(3). Also displays 25-hydroxylase activity on vitamin D(2) and 7-dehydrocholesterol. May play a role in the biosynthesis of steroid metabolic intermediates. The sequence is that of Vitamin D(3) 25-hydroxylase from Pseudonocardia autotrophica (Amycolata autotrophica).